Consider the following 388-residue polypeptide: Succinate--CoA ligase [ADP-forming] subunit beta (388 aa).

The region spanning 9-245 is the ATP-grasp domain; it reads KALLKKYGVS…KSQENERELK (237 aa). ATP contacts are provided by residues lysine 46, 53–55, glutamate 100, tyrosine 103, and glutamate 108; that span reads GRG. Residues asparagine 200 and aspartate 214 each contribute to the Mg(2+) site. Substrate-binding positions include asparagine 265 and 322–324; that span reads GIV.

Belongs to the succinate/malate CoA ligase beta subunit family. In terms of assembly, heterotetramer of two alpha and two beta subunits. Mg(2+) serves as cofactor.

It carries out the reaction succinate + ATP + CoA = succinyl-CoA + ADP + phosphate. It catalyses the reaction GTP + succinate + CoA = succinyl-CoA + GDP + phosphate. The protein operates within carbohydrate metabolism; tricarboxylic acid cycle; succinate from succinyl-CoA (ligase route): step 1/1. Its function is as follows. Succinyl-CoA synthetase functions in the citric acid cycle (TCA), coupling the hydrolysis of succinyl-CoA to the synthesis of either ATP or GTP and thus represents the only step of substrate-level phosphorylation in the TCA. The beta subunit provides nucleotide specificity of the enzyme and binds the substrate succinate, while the binding sites for coenzyme A and phosphate are found in the alpha subunit. The sequence is that of Succinate--CoA ligase [ADP-forming] subunit beta from Acinetobacter baylyi (strain ATCC 33305 / BD413 / ADP1).